The chain runs to 282 residues: Bis(5'-nucleosyl)-tetraphosphatase, symmetrical (282 aa).

This sequence belongs to the Ap4A hydrolase family. Monomer.

It catalyses the reaction P(1),P(4)-bis(5'-adenosyl) tetraphosphate + H2O = 2 ADP + 2 H(+). Hydrolyzes diadenosine 5',5'''-P1,P4-tetraphosphate to yield ADP. This Escherichia coli O157:H7 protein is Bis(5'-nucleosyl)-tetraphosphatase, symmetrical.